We begin with the raw amino-acid sequence, 435 residues long: tRNA(Ile)-lysidine synthase (435 aa).

S25–S30 is a binding site for ATP.

This sequence belongs to the tRNA(Ile)-lysidine synthase family.

Its subcellular location is the cytoplasm. The enzyme catalyses cytidine(34) in tRNA(Ile2) + L-lysine + ATP = lysidine(34) in tRNA(Ile2) + AMP + diphosphate + H(+). In terms of biological role, ligates lysine onto the cytidine present at position 34 of the AUA codon-specific tRNA(Ile) that contains the anticodon CAU, in an ATP-dependent manner. Cytidine is converted to lysidine, thus changing the amino acid specificity of the tRNA from methionine to isoleucine. The chain is tRNA(Ile)-lysidine synthase from Photobacterium profundum (strain SS9).